A 312-amino-acid chain; its full sequence is 2-aminophenol 1,6-dioxygenase subunit beta (312 aa).

Fe cation-binding residues include His-13, His-62, and Glu-251.

Belongs to the LigB/MhpB extradiol dioxygenase family. As to quaternary structure, the APD complex is a heterotetramer of 2 alpha (CnbCa) and 2 beta (CnbCb) subunits. Fe(2+) serves as cofactor.

The catalysed reaction is 2-aminophenol + O2 = 2-aminomuconate 6-semialdehyde. The enzyme catalyses 2-amino-5-chlorophenol + O2 = 2-amino-5-chloromuconate 6-semialdehyde. It participates in xenobiotic degradation; nitrobenzene degradation. It functions in the pathway xenobiotic degradation; 4-chloronitrobenzene degradation. Its activity is regulated as follows. Complete loss of activity in the presence of Ni(2+), Co(2+), Cd(2+), Zn(2+) and hydrogen peroxide, however activity with hydrogen peroxide partially restored upon addition of excess ascorbate. Partially inhibited by Fe(2+), Mg(2+), Ca(2+), Mn(2+), Cu(2+) and also by EDTA, at 2 mM concentration. Total activity inhibited in the presence of catechol or 4-nitrocatechol but completely restored after removal of catechol and addition of 2 mM Fe(2+) and 5 mM ascorbate. Component of the 2-aminophenol 1,6-dioxygenase (APD) complex that catalyzes the ring fission of 2-aminophenol to produce 2-aminomuconic semialdehyde. CnbCb seems to be the catalytic subunit of the complex. Also active on other substrates such as 2-amino-5-chlorophenol (68% activity), protocatechuate (33% activity) and catechol (5% activity). Both 2-aminophenol and 2-amino-5-cholorophenol are likely native substrates for this dioxygenase which is involved in the reductive degradation pathway of both nitrobenzene (NB) and 4-chloronitrobenzene (4-CNB), allowing C.testosteroni strain CNB-1 to grow on these compounds as sole source of carbon, nitrogen, and energy. This Comamonas testosteroni (Pseudomonas testosteroni) protein is 2-aminophenol 1,6-dioxygenase subunit beta.